A 446-amino-acid polypeptide reads, in one-letter code: Histidine--tRNA ligase (446 aa).

It belongs to the class-II aminoacyl-tRNA synthetase family. In terms of assembly, homodimer.

It is found in the cytoplasm. The catalysed reaction is tRNA(His) + L-histidine + ATP = L-histidyl-tRNA(His) + AMP + diphosphate + H(+). This Burkholderia pseudomallei (strain 668) protein is Histidine--tRNA ligase.